The sequence spans 130 residues: Anti-adapter protein IraD (130 aa).

Belongs to the GpW/Gp25 family. IraD subfamily. Interacts with RssB.

The protein localises to the cytoplasm. Its function is as follows. Inhibits RpoS proteolysis by regulating RssB activity, thereby increasing the stability of the sigma stress factor RpoS during oxidative stress. Its effect on RpoS stability is due to its interaction with RssB, which probably blocks the interaction of RssB with RpoS, and the consequent delivery of the RssB-RpoS complex to the ClpXP protein degradation pathway. This chain is Anti-adapter protein IraD, found in Escherichia coli O157:H7.